Reading from the N-terminus, the 211-residue chain is MTKVLFITANPNSAEGSFGMAVGEAFIEAYKNEHPQDEVVTIDLFNTTVPAIDADVFAAWGKFAAGEGFEALTEAQQQKVAAMNTNLETFMHADRYVFVTPMWNFSYPPVVKAYLDNLAIAGKTFKYTENGPVGLLEGKKALHIQATGGVYSEGAYAAVDFGRNHLKTVLGFIGVNETEYIAVEGMNANPEKAQEIKEAAIANARELAKRF.

102–105 (MWNF) lines the FMN pocket.

This sequence belongs to the azoreductase type 1 family. Homodimer. It depends on FMN as a cofactor.

It catalyses the reaction 2 a quinone + NADH + H(+) = 2 a 1,4-benzosemiquinone + NAD(+). It carries out the reaction N,N-dimethyl-1,4-phenylenediamine + anthranilate + 2 NAD(+) = 2-(4-dimethylaminophenyl)diazenylbenzoate + 2 NADH + 2 H(+). Quinone reductase that provides resistance to thiol-specific stress caused by electrophilic quinones. In terms of biological role, also exhibits azoreductase activity. Catalyzes the reductive cleavage of the azo bond in aromatic azo compounds to the corresponding amines. In Bacillus cereus (strain ATCC 10987 / NRS 248), this protein is FMN-dependent NADH:quinone oxidoreductase 3.